A 74-amino-acid polypeptide reads, in one-letter code: Conotoxin Im6.10 (74 aa).

Residues 1 to 19 (MKTGMIICLLLIAFMDADG) form the signal peptide. The propeptide occupies 20 to 47 (SPGDTLYSQKTADTDSGMKRFQKTFQKR). Intrachain disulfides connect cysteine 49-cysteine 58, cysteine 52-cysteine 63, and cysteine 57-cysteine 73.

In terms of tissue distribution, expressed by the venom duct.

It is found in the secreted. In terms of biological role, probable neurotoxin. The sequence is that of Conotoxin Im6.10 from Conus imperialis (Imperial cone).